A 189-amino-acid polypeptide reads, in one-letter code: dCTP deaminase (189 aa).

DCTP is bound by residues 112–117 (KSTYAR), 136–138 (TLE), glutamine 157, tyrosine 171, and glutamine 181. Residue glutamate 138 is the Proton donor/acceptor of the active site.

It belongs to the dCTP deaminase family. Homotrimer.

The catalysed reaction is dCTP + H2O + H(+) = dUTP + NH4(+). It participates in pyrimidine metabolism; dUMP biosynthesis; dUMP from dCTP (dUTP route): step 1/2. Functionally, catalyzes the deamination of dCTP to dUTP. The protein is dCTP deaminase of Burkholderia mallei (strain NCTC 10247).